A 183-amino-acid chain; its full sequence is UPF0316 protein GTNG_0803 (183 aa).

3 helical membrane passes run 5-25 (IVLV…RTIF), 33-53 (LAAF…SIVF), and 59-79 (YIVM…LEDI).

This sequence belongs to the UPF0316 family.

Its subcellular location is the cell membrane. In Geobacillus thermodenitrificans (strain NG80-2), this protein is UPF0316 protein GTNG_0803.